Consider the following 445-residue polypeptide: Methylenetetrahydrofolate--tRNA-(uracil-5-)-methyltransferase TrmFO (445 aa).

G10 to G15 is an FAD binding site.

The protein belongs to the MnmG family. TrmFO subfamily. It depends on FAD as a cofactor.

The protein resides in the cytoplasm. It catalyses the reaction uridine(54) in tRNA + (6R)-5,10-methylene-5,6,7,8-tetrahydrofolate + NADH + H(+) = 5-methyluridine(54) in tRNA + (6S)-5,6,7,8-tetrahydrofolate + NAD(+). It carries out the reaction uridine(54) in tRNA + (6R)-5,10-methylene-5,6,7,8-tetrahydrofolate + NADPH + H(+) = 5-methyluridine(54) in tRNA + (6S)-5,6,7,8-tetrahydrofolate + NADP(+). In terms of biological role, catalyzes the folate-dependent formation of 5-methyl-uridine at position 54 (M-5-U54) in all tRNAs. The polypeptide is Methylenetetrahydrofolate--tRNA-(uracil-5-)-methyltransferase TrmFO (Microcystis aeruginosa (strain NIES-843 / IAM M-2473)).